A 2272-amino-acid polypeptide reads, in one-letter code: Voltage-dependent R-type calcium channel subunit alpha-1E (2272 aa).

Residues 1-40 (MARFGEAVVVGRPGSGDGDSDQSRNRQGTPVPASGPAAAY) are disordered. Over 1-90 (MARFGEAVVV…KYAKKLIDWP (90 aa)) the chain is Cytoplasmic. A phosphoserine mark is found at Ser-15 and Ser-20. Residues 77-355 (NIVRKYAKKL…LVLGVLSGEF (279 aa)) form an I repeat. A helical transmembrane segment spans residues 91–109 (PFEYMILATIIANCIVLAL). Over 110 to 128 (EQHLPEDDKTPMSRRLEKT) the chain is Extracellular. A helical transmembrane segment spans residues 129–147 (EPYFIGIFCFEAGIKIVAL). Residues 148-159 (GFIFHKGSYLRN) lie on the Cytoplasmic side of the membrane. Residues 160-174 (GWNVMDFIVVLSGIL) traverse the membrane as a helical segment. Over 175–186 (ATAGTHFNTHVD) the chain is Extracellular. The helical transmembrane segment at 187 to 206 (LRALRAVRVLRPLKLVSGIP) threads the bilayer. At 207-224 (SLQIVLKSIMKAMVPLLQ) the chain is on the cytoplasmic side. Residues 225–245 (IGLLLFFAILMFAIIGLEFYS) form a helical membrane-spanning segment. The Extracellular segment spans residues 246-327 (GKLHRACFMN…NTNDALGATW (82 aa)). An N-linked (GlcNAc...) asparagine glycan is attached at Asn-255. A helical membrane pass occupies residues 328–351 (NWLYFIPLIIIGSFFVLNLVLGVL). Over 352–477 (SGEFAKERER…ISIRHMVKSQ (126 aa)) the chain is Cytoplasmic. A binding to the beta subunit region spans residues 375–392 (QQIERELNGYRAWIDKAE). Ca(2+) is bound at residue Asp-427. Residue Ser-428 is modified to Phosphoserine. Ca(2+) is bound by residues Ser-429, Glu-431, Cys-433, and Ser-438. At Thr-441 the chain carries Phosphothreonine. Residues 463–707 (ERLLRISIRH…VFLAIAVDNL (245 aa)) form an II repeat. Residues 478–497 (VFYWIVLSVVALNTACVAIV) traverse the membrane as a helical segment. Over 498–510 (HHNQPQWLTHLLY) the chain is Extracellular. The chain crosses the membrane as a helical span at residues 511-530 (YAEFLFLGLFLLEMSLKMYG). Topologically, residues 531-539 (MGPRLYFHS) are cytoplasmic. A helical membrane pass occupies residues 540 to 558 (SFNCFDFGVTVGSIFEVVW). Residues 559–568 (AIFRPGTSFG) lie on the Extracellular side of the membrane. Residues 569–587 (ISVLRALRLLRIFKITKYW) form a helical membrane-spanning segment. The Cytoplasmic portion of the chain corresponds to 588 to 606 (ASLRNLVVSLMSSMKSIIS). Residues 607–626 (LLFLLFLFIVVFALLGMQLF) form a helical membrane-spanning segment. Over 627-679 (GGRFNFNDGTPSANFDTFPAAIMTVFQILTGEDWNEVMYNGIRSQGGVSSGMW) the chain is Extracellular. Residues 680–704 (SAIYFIVLTLFGNYTLLNVFLAIAV) traverse the membrane as a helical segment. The Cytoplasmic portion of the chain corresponds to 705–1150 (DNLANAQELT…TTNPIRRACH (446 aa)). Residues 730–777 (LQKAKEVSPMSAPNMPSIERDRRRRHHMSMWEPRSSHLRERRRRHHMS) are disordered. Phosphoserine is present on residues Ser-737, Ser-746, Ser-794, Ser-816, and Ser-856. Disordered regions lie at residues 854–994 (GGSL…VPRG) and 1091–1127 (SNKT…RETG). Positions 914–927 (RHRQSQRRSRHRRV) are enriched in basic residues. Positions 934–946 (SASASRSRSASQE) are enriched in low complexity. Ser-948 carries the phosphoserine modification. 2 stretches are compositionally biased toward basic and acidic residues: residues 956-985 (EGEK…DLRR) and 1094-1105 (TDGEASPLKEAE). At Ser-1099 the chain carries Phosphoserine. The III repeat unit spans residues 1143–1429 (NPIRRACHYI…IFVALIIITF (287 aa)). The chain crosses the membrane as a helical span at residues 1151–1167 (YIVNLRYFEMCILLVIA). Over 1168–1191 (ASSIALAAEDPVLTNSERNKVLRY) the chain is Extracellular. Residues 1192–1211 (FDYVFTGVFTFEMVIKMIDQ) form a helical membrane-spanning segment. Topologically, residues 1212–1219 (GLILQDGS) are cytoplasmic. Residues 1220-1242 (YFRDLWNILDFVVVVGALVAFAL) traverse the membrane as a helical segment. The Extracellular portion of the chain corresponds to 1243-1256 (ANALGTNKGRDIKT). Residues 1257 to 1274 (IKSLRVLRVLRPLKTIKR) form a helical membrane-spanning segment. Topologically, residues 1275–1293 (LPKLKAVFDCVVTSLKNVF) are cytoplasmic. A helical transmembrane segment spans residues 1294–1313 (NILIVYKLFMFIFAVIAVQL). The Extracellular portion of the chain corresponds to 1314-1400 (FKGKFFYCTD…DRGPSRSNRM (87 aa)). The helical transmembrane segment at 1401–1424 (EMSIFYVVYFVVFPFFFVNIFVAL) threads the bilayer. The Cytoplasmic portion of the chain corresponds to 1425 to 1481 (IIITFQEQGDKMMEECSLEKNERACIDFAISAKPLTRYMPQNRHTFQYRVWHFVVSP). The stretch at 1466 to 1729 (NRHTFQYRVW…LFVAVIMDNF (264 aa)) is one IV repeat. The helical transmembrane segment at 1482–1500 (SFEYTIMAMIALNTVVLMM) threads the bilayer. Residues 1501–1515 (KYYTAPCTYELALKY) lie on the Extracellular side of the membrane. The helical transmembrane segment at 1516–1535 (LNIAFTMVFSLECVLKVIAF) threads the bilayer. At 1536 to 1543 (GFLNYFRD) the chain is on the cytoplasmic side. The chain crosses the membrane as a helical span at residues 1544 to 1562 (TWNIFDFITVIGSITEIIL). Over 1563-1573 (TDSKLVNTSGF) the chain is Extracellular. A glycan (N-linked (GlcNAc...) asparagine) is linked at Asn-1569. The chain crosses the membrane as a helical span at residues 1574 to 1592 (NMSFLKLFRAARLIKLLRQ). At 1593–1611 (GYTIRILLWTFVQSFKALP) the chain is on the cytoplasmic side. Residues 1612–1631 (YVCLLIAMLFFIYAIIGMQV) form a helical membrane-spanning segment. The Extracellular segment spans residues 1632-1700 (FGNIKLDEES…QNESERCGTD (69 aa)). Asn-1692 is a glycosylation site (N-linked (GlcNAc...) asparagine). The helical transmembrane segment at 1701-1726 (LAYVYFVSFIFFCSFLMLNLFVAVIM) threads the bilayer. Over 1727–2272 (DNFEYLTRDS…LSDTEEDDKC (546 aa)) the chain is Cytoplasmic. The EF-hand domain occupies 1742 to 1777 (HHLDEFVRVWAEYDRAACGRIHYTEMYEMLTLMSPP). Residues Asp-1755, Arg-1761, and Glu-1766 each coordinate Ca(2+). The tract at residues 2021–2186 (SAHRLNSDSG…QQGQHPSPQH (166 aa)) is disordered. Over residues 2025 to 2045 (LNSDSGHKSDTHRSGGRERGR) the composition is skewed to basic and acidic residues. Ser-2054 and Ser-2073 each carry phosphoserine. Over residues 2061–2078 (NSEERGTQADWESPERRQ) the composition is skewed to basic and acidic residues. The span at 2097–2112 (SLSESSIPSISDTSTP) shows a compositional bias: low complexity. Positions 2155–2174 (LASQALESNSACLTESSNSL) are enriched in polar residues. The span at 2175 to 2186 (HPQQGQHPSPQH) shows a compositional bias: low complexity.

This sequence belongs to the calcium channel alpha-1 subunit (TC 1.A.1.11) family. CACNA1E subfamily. In terms of assembly, interacts with EFHC1. Voltage-dependent calcium channels are multisubunit complexes, consisting of alpha-1, alpha-2, beta and delta subunits in a 1:1:1:1 ratio. The channel activity is directed by the pore-forming and voltage-sensitive alpha-1 subunit. In many cases, this subunit is sufficient to generate voltage-sensitive calcium channel activity. The auxiliary subunits beta and alpha-2/delta linked by a disulfide bridge regulate the channel activity. In terms of tissue distribution, expressed in neuronal tissues, retina, spleen, and pancreatic islet cells.

The protein localises to the membrane. It carries out the reaction Ca(2+)(in) = Ca(2+)(out). In terms of biological role, voltage-sensitive calcium channels (VSCC) mediate the entry of calcium ions into excitable cells and are also involved in a variety of calcium-dependent processes, including muscle contraction, hormone or neurotransmitter release, gene expression, cell motility, cell division and cell death. The isoform alpha-1E gives rise to R-type calcium currents. R-type calcium channels belong to the 'high-voltage activated' (HVA) group and are blocked by nickel. They are however insensitive to dihydropyridines (DHP). Calcium channels containing alpha-1E subunit could be involved in the modulation of firing patterns of neurons which is important for information processing. The polypeptide is Voltage-dependent R-type calcium channel subunit alpha-1E (Cacna1e) (Mus musculus (Mouse)).